An 86-amino-acid chain; its full sequence is Large ribosomal subunit protein bL27 (86 aa).

The tract at residues 1 to 22 (MATKKAGGSSRNGRDSAGRRLG) is disordered.

This sequence belongs to the bacterial ribosomal protein bL27 family.

This chain is Large ribosomal subunit protein bL27, found in Rickettsia rickettsii (strain Iowa).